Reading from the N-terminus, the 567-residue chain is MEIYHQYIKLRKQFGRFPKFGDEGSEMLADIRPNEDHGKEYIPRNPVTTVTQCVPEMSEHEANTNAVILVNKAMSHVEGGWPKDVDYTEAEHTIRYRKKVEKDEDYIRTVVQLGSSVEDLIKQNNAVDIYQEYFTNVTMDHTSEAPHVKTVTVFKDPNNIKRSASYVNWHPDGSVPKVVVAYSILQFQQQPAGMPLSSYIWDVNNPNTPEYEMVPTSQICCAKFNLKDNNLVGAGQYNGQLAYFDVRKGNGPVEATPIDISHRDPIYDFAWLQSKTGTECMTVSTDGNVLWWDLRKMNECVENMPLKEKNSETTVGGVCLEYDTNAGPTNFMVGTEQGQIFSCNRKAKNPVDRVKYVLSGHHGPIYGLRRNPFNSKYFLSIGDWTARVWVEDTAVKTPILTTKYHPTYLTGGTWSPSRPGVFFTIKMDGAMDVWDLYYKHNEPTLTVQVSDLALTAFAVQESGGTVAVGTSDGCTSVLQLSTGLSEASPAEKANINAMFERETTREKNLEKAIKEAKVKARKEQGRRDEVKDNVTEEQLKALEDEFFKTTDPAVGGGYGAGEGAAAE.

4 WD repeats span residues Val-214 to Glu-254, Ser-261 to Glu-302, Gly-360 to Ile-399, and Tyr-404 to Thr-444.

This sequence belongs to the dynein intermediate chain family. Consists of at least 3 heavy chains (alpha, beta and gamma), 2 intermediate chains and 8 light chains.

The protein resides in the cytoplasm. Its subcellular location is the cytoskeleton. The protein localises to the flagellum axoneme. Its function is as follows. May play a role in regulating dynein heavy chain (DHC) activity. May function in holding IC78 to the DHC, or in stabilizing the entire dynein complex. The protein is Dynein, 70 kDa intermediate chain, flagellar outer arm (ODA6) of Chlamydomonas reinhardtii (Chlamydomonas smithii).